The primary structure comprises 45 residues: Photosystem II reaction center protein K (45 aa).

The propeptide occupies 1–8 (METALLLA). The chain crosses the membrane as a helical span at residues 24–44 (LPLIPLFFLLLAFVWQASVGF).

Belongs to the PsbK family. PSII is composed of 1 copy each of membrane proteins PsbA, PsbB, PsbC, PsbD, PsbE, PsbF, PsbH, PsbI, PsbJ, PsbK, PsbL, PsbM, PsbT, PsbX, PsbY, PsbZ, Psb30/Ycf12, peripheral proteins PsbO, CyanoQ (PsbQ), PsbU, PsbV and a large number of cofactors. It forms dimeric complexes.

The protein resides in the cellular thylakoid membrane. In terms of biological role, one of the components of the core complex of photosystem II (PSII). PSII is a light-driven water:plastoquinone oxidoreductase that uses light energy to abstract electrons from H(2)O, generating O(2) and a proton gradient subsequently used for ATP formation. It consists of a core antenna complex that captures photons, and an electron transfer chain that converts photonic excitation into a charge separation. The sequence is that of Photosystem II reaction center protein K from Microcystis aeruginosa (strain NIES-843 / IAM M-2473).